The following is a 191-amino-acid chain: Thymidylate kinase (191 aa).

Residue 7 to 14 participates in ATP binding; it reads GIDTAGKS.

The protein belongs to the thymidylate kinase family.

The catalysed reaction is dTMP + ATP = dTDP + ADP. Functionally, phosphorylation of dTMP to form dTDP in both de novo and salvage pathways of dTTP synthesis. The polypeptide is Thymidylate kinase (Sulfurimonas denitrificans (strain ATCC 33889 / DSM 1251) (Thiomicrospira denitrificans (strain ATCC 33889 / DSM 1251))).